Reading from the N-terminus, the 381-residue chain is MRKRNESVTVEHERAAAAPAPLDKGCSLRHSLRLPAADTGMKRPLGRRHGLWFRLRRLIIWLLGVYIAIPFLVKLCPAIQAKLVFLNFVRVPYFIDLKRPQDQGLNHTCNYYLQPEEDVTIGVWHTVPAALWKNARGKDQLWFEDALGSSHPVILYLHGNAGTRGGDHRVELYKVLSSLGYHVVTFDYRGWGDSVGSPSERGMTYDALHVFDWIKARSGDNPVYIWGHSLGTGVATNLVRRLCERETPPEALILESPFTNIREEARSHPFSVIYRYFPGFDWFFLDPITTSGIKFANDENVKYISCSLLILHAEDDPVVPFHLGKKLYNIAATSRSFRDYKVQFVPFHTDLGYRHKYIYRSPELPRILREFLGIPEHEHHH.

Residues 1 to 58 lie on the Cytoplasmic side of the membrane; that stretch reads MRKRNESVTVEHERAAAAPAPLDKGCSLRHSLRLPAADTGMKRPLGRRHGLWFRLRRL. A helical membrane pass occupies residues 59 to 79; it reads IIWLLGVYIAIPFLVKLCPAI. Residues 80–381 are Extracellular-facing; sequence QAKLVFLNFV…LGIPEHEHHH (302 aa). Residue N106 is glycosylated (N-linked (GlcNAc...) asparagine). S229 serves as the catalytic Nucleophile. Catalysis depends on charge relay system residues D316 and H355.

This sequence belongs to the serine esterase family.

The protein localises to the endoplasmic reticulum membrane. The enzyme catalyses 1-(9Z-octadecenoyl)-sn-glycero-3-phospho-L-serine + H2O = sn-glycero-3-phospho-L-serine + (9Z)-octadecenoate + H(+). It carries out the reaction 1-(9Z-octadecenoyl)-sn-glycero-3-phospho-(1'-sn-glycerol) + H2O = sn-glycero-3-phospho-(1'-sn-glycerol) + (9Z)-octadecenoate + H(+). The catalysed reaction is 1-(9Z-octadecenoyl)-sn-glycero-3-phospho-(1D-myo-inositol) + H2O = sn-glycero-3-phospho-1D-myo-inositol + (9Z)-octadecenoate + H(+). It catalyses the reaction 1-(9Z-octadecenoyl)-sn-glycero-3-phosphoethanolamine + H2O = sn-glycero-3-phosphoethanolamine + (9Z)-octadecenoate + H(+). The enzyme catalyses 1-(9Z-octadecenoyl)-sn-glycero-3-phosphocholine + H2O = 1-(9Z-octadecenoyl)-sn-glycerol + phosphocholine + H(+). It carries out the reaction 2-(9Z-octadecenoyl)-glycerol + H2O = glycerol + (9Z)-octadecenoate + H(+). The catalysed reaction is 1-hexadecanoyl-sn-glycero-3-phospho-L-serine + H2O = sn-glycero-3-phospho-L-serine + hexadecanoate + H(+). It catalyses the reaction 2-(5Z,8Z,11Z,14Z-eicosatetraenoyl)-glycerol + H2O = glycerol + (5Z,8Z,11Z,14Z)-eicosatetraenoate + H(+). The enzyme catalyses Hydrolyzes glycerol monoesters of long-chain fatty acids.. It carries out the reaction 1-decanoylglycerol + H2O = decanoate + glycerol + H(+). The catalysed reaction is 1-dodecanoylglycerol + H2O = dodecanoate + glycerol + H(+). It catalyses the reaction 1-tetradecanoylglycerol + H2O = tetradecanoate + glycerol + H(+). The enzyme catalyses 2-hexadecanoylglycerol + H2O = glycerol + hexadecanoate + H(+). It carries out the reaction 1-(9Z-octadecenoyl)-glycerol + H2O = glycerol + (9Z)-octadecenoate + H(+). The catalysed reaction is 2-(9Z,12Z-octadecadienoyl)-glycerol + H2O = (9Z,12Z)-octadecadienoate + glycerol + H(+). It catalyses the reaction 1-(5Z,8Z,11Z,14Z-eicosatetraenoyl)-glycerol + H2O = glycerol + (5Z,8Z,11Z,14Z)-eicosatetraenoate + H(+). The enzyme catalyses 1-(9Z,12Z-octadecadienoyl)-glycerol + H2O = (9Z,12Z)-octadecadienoate + glycerol + H(+). It carries out the reaction 1-hexadecanoylglycerol + H2O = glycerol + hexadecanoate + H(+). The catalysed reaction is 1-octadecanoylglycerol + H2O = octadecanoate + glycerol + H(+). It catalyses the reaction 1-octadecanoyl-2-(9,10-epoxyoctadecanoyl)-sn-glycero-3-phospho-L-serine + H2O = 9,10-epoxyoctadecanoate + 1-octadecanoyl-sn-glycero-3-phosphoserine + H(+). The enzyme catalyses 1-octadecanoyl-2-(10-hydroxyoctadecanoyl)-sn-glycero-3-phospho-L-serine + H2O = 1-octadecanoyl-sn-glycero-3-phosphoserine + 10-hydroxyoctadecanoate + H(+). It carries out the reaction 1-hexadecanoyl-2-(10-hydroxyoctadecanoyl)-sn-glycero-3-phospho-L-serine + H2O = 10-hydroxyoctadecanoate + 1-hexadecanoyl-sn-glycero-3-phospho-L-serine + H(+). In terms of biological role, lysophosphatidylserine (LPS) lipase that mediates the hydrolysis of lysophosphatidylserine, a class of signaling lipids that regulates immunological and neurological processes. Represents a major lysophosphatidylserine lipase in the brain, thereby playing a key role in the central nervous system. Also able to hydrolyze oxidized phosphatidylserine; oxidized phosphatidylserine is produced in response to severe inflammatory stress and constitutes a proapoptotic 'eat me' signal. Also has monoacylglycerol (MAG) lipase activity: hydrolyzes 2-arachidonoylglycerol (2-AG), thereby acting as a regulator of endocannabinoid signaling pathways. Has a strong preference for very-long-chain lipid substrates; substrate specificity is likely due to improved catalysis and not improved substrate binding. The polypeptide is Lysophosphatidylserine lipase ABHD12 (Gallus gallus (Chicken)).